The following is a 221-amino-acid chain: Keratin-associated protein 10-3 (221 aa).

Tandem repeats lie at residues 26–30 (CCEPP), 31–35 (CCATS), 36–40 (CCAPA), 57–61 (CCQAA), 79–83 (CCQQS), 89–93 (CCTSS), 99–103 (CCVPV), 104–108 (CCKPV), 109–113 (CCVPV), 114–118 (CCKPV), 119–123 (CCKPI), 124–128 (CCVPV), 136–140 (CCQQS), 146–150 (CCTTS), 151–155 (CCRPS), 177–181 (CCAPA), 188–192 (CCRPA), and 210–214 (CCGLS). Residues 26-214 (CCEPPCCATS…RLSSACCGLS (189 aa)) are 18 X 5 AA repeats of C-C-X(3).

It belongs to the KRTAP type 10 family. In terms of assembly, interacts with hair keratins. As to expression, restricted to a narrow region of the hair fiber cuticle, lying approximately 20 cell layers above the apex of the dermal papilla of the hair root; not detected in any other tissues.

Its function is as follows. In the hair cortex, hair keratin intermediate filaments are embedded in an interfilamentous matrix, consisting of hair keratin-associated proteins (KRTAP), which are essential for the formation of a rigid and resistant hair shaft through their extensive disulfide bond cross-linking with abundant cysteine residues of hair keratins. The matrix proteins include the high-sulfur and high-glycine-tyrosine keratins. In Homo sapiens (Human), this protein is Keratin-associated protein 10-3 (KRTAP10-3).